The sequence spans 226 residues: Cytidylate kinase (226 aa).

10 to 18 (GPAGAGKST) lines the ATP pocket.

The protein belongs to the cytidylate kinase family. Type 1 subfamily.

The protein resides in the cytoplasm. It carries out the reaction CMP + ATP = CDP + ADP. It catalyses the reaction dCMP + ATP = dCDP + ADP. The protein is Cytidylate kinase of Caldicellulosiruptor saccharolyticus (strain ATCC 43494 / DSM 8903 / Tp8T 6331).